The chain runs to 591 residues: Probable translation initiation factor IF-2 (591 aa).

Residues I6–M220 enclose the tr-type G domain. The interval G15–T22 is G1. GTP is bound at residue G15–T22. The interval A40–H44 is G2. The interval D76–G79 is G3. GTP is bound by residues D76 to H80 and T130 to D133. The interval T130 to D133 is G4. Positions S198–H200 are G5.

Belongs to the TRAFAC class translation factor GTPase superfamily. Classic translation factor GTPase family. IF-2 subfamily.

Function in general translation initiation by promoting the binding of the formylmethionine-tRNA to ribosomes. Seems to function along with eIF-2. This Methanoregula boonei (strain DSM 21154 / JCM 14090 / 6A8) protein is Probable translation initiation factor IF-2.